The primary structure comprises 463 residues: Protein DML1 (463 aa).

This sequence belongs to the misato family.

Its subcellular location is the mitochondrion. In terms of biological role, involved in the partitioning of the mitochondrial organelle and mitochondrial DNA (mtDNA) inheritance. This is Protein DML1 (DML1) from Debaryomyces hansenii (strain ATCC 36239 / CBS 767 / BCRC 21394 / JCM 1990 / NBRC 0083 / IGC 2968) (Yeast).